A 225-amino-acid polypeptide reads, in one-letter code: Ribosomal RNA small subunit methyltransferase G (225 aa).

Residues G96, F101, 146 to 147 (AE), and R160 each bind S-adenosyl-L-methionine.

The protein belongs to the methyltransferase superfamily. RNA methyltransferase RsmG family.

Its subcellular location is the cytoplasm. Specifically methylates the N7 position of a guanine in 16S rRNA. The chain is Ribosomal RNA small subunit methyltransferase G from Mycoplasma mobile (strain ATCC 43663 / 163K / NCTC 11711) (Mesomycoplasma mobile).